The following is a 139-amino-acid chain: Small ribosomal subunit protein bS6 (139 aa).

A compositionally biased stretch (basic and acidic residues) spans 95–121; that stretch reads AVTEQSEMLKAEESRNERRERRERPND. The disordered stretch occupies residues 95-139; sequence AVTEQSEMLKAEESRNERRERRERPNDNAEGADGDDNSDSDNADE. Residues 124–139 show a composition bias toward acidic residues; sequence EGADGDDNSDSDNADE.

It belongs to the bacterial ribosomal protein bS6 family.

Functionally, binds together with bS18 to 16S ribosomal RNA. This chain is Small ribosomal subunit protein bS6, found in Pseudomonas aeruginosa (strain LESB58).